Here is a 227-residue protein sequence, read N- to C-terminus: Uracil-DNA glycosylase (227 aa).

The active-site Proton acceptor is D64.

This sequence belongs to the uracil-DNA glycosylase (UDG) superfamily. UNG family.

Its subcellular location is the cytoplasm. It catalyses the reaction Hydrolyzes single-stranded DNA or mismatched double-stranded DNA and polynucleotides, releasing free uracil.. In terms of biological role, excises uracil residues from the DNA which can arise as a result of misincorporation of dUMP residues by DNA polymerase or due to deamination of cytosine. This Erwinia tasmaniensis (strain DSM 17950 / CFBP 7177 / CIP 109463 / NCPPB 4357 / Et1/99) protein is Uracil-DNA glycosylase.